The sequence spans 389 residues: MGRVKLKIKRLESTSNRQVTYTKRKNGILKKAKELSILCDIDIVLLMFSPTGRATAFHGEHSCIEEVISKFAQLTPQERTKRKLESLEALKKTFKKLDHDVNIHDFLGARNQTIEGLSNQVAIYQAQLMECHRRLSCWTNIDRIENTEHLDLLEESLRKSIERIQIHKEHYRKNQLLPIECATTQFHSGIQLPMAMGGNSSMQEAHSMSWLPDNDHQQTILPGDSSFLPHREMDGSIPVYSSCFFESTKPEDQICSNPGQQFEQLEQQGNGCLGLQQLGEEYSYPTPFGTTLGMEEDQEKKIKSEMELNNLQQQQQQQQQQQQQDPSMYDPMANNNGGCFQIPHDQSMFVNDHHHHHHHHHQNWVPDSMFGQTSYNQVCVFTPPLELSR.

In terms of domain architecture, MADS-box spans 1-61 (MGRVKLKIKR…GRATAFHGEH (61 aa)). Coiled coils occupy residues 77 to 131 (QERT…LMEC) and 293 to 325 (GMEEDQEKKIKSEMELNNLQQQQQQQQQQQQQD). A disordered region spans residues 310–343 (NLQQQQQQQQQQQQQDPSMYDPMANNNGGCFQIP). A compositionally biased stretch (low complexity) spans 312–324 (QQQQQQQQQQQQQ).

Forms a heterodimer with AGL104. In terms of tissue distribution, expressed in pollen.

It localises to the nucleus. Probable transcription factor that forms a heterodimer with the MADS-box protein AGL104 and is involved in the regulation of pollen maturation at the late stages of pollen development and pollen tube growth. The chain is Agamous-like MADS-box protein AGL65 from Arabidopsis thaliana (Mouse-ear cress).